The primary structure comprises 1037 residues: Multidrug resistance protein MdtF (1037 aa).

At 1 to 9 (MANYFIDRP) the chain is on the cytoplasmic side. Residues 10–30 (VFAWVLAIIMMLAGGLAIMNL) traverse the membrane as a helical segment. The Periplasmic segment spans residues 31 to 338 (PVAQYPQIAP…TTPFIKISIQ (308 aa)). Residues 339–359 (EVFKTLVEAIILVFLVMYLFL) form a helical membrane-spanning segment. The Cytoplasmic segment spans residues 360–369 (QNFRATIIPT). The chain crosses the membrane as a helical span at residues 370-390 (IAVPVVILGTFAILSAVGFTI). The Periplasmic portion of the chain corresponds to 391 to 392 (NT). Residues 393–413 (LTMFGMVLAIGLLVDDAIVVV) traverse the membrane as a helical segment. The Cytoplasmic portion of the chain corresponds to 414–440 (ENVERVIAEDKLPPKEATHKSMGQIQR). A helical transmembrane segment spans residues 441-461 (ALVGIAVVLSAVFMPMAFMSG). Over 462 to 471 (ATGEIYRQFS) the chain is Periplasmic. Residues 472-492 (ITLISSMLLSVFVAMSLTPAL) traverse the membrane as a helical segment. Residues 493 to 534 (CATILKAAPEGGHKPNALFARFNTLFEKSTQHYTDSTRSLLR) lie on the Cytoplasmic side of the membrane. The helical transmembrane segment at 535 to 555 (CTGRYMVVYLLICAGMAVLFL) threads the bilayer. Over 556 to 870 (RTPTSFLPEE…SYQEALSSNQ (315 aa)) the chain is Periplasmic. A helical membrane pass occupies residues 871 to 891 (APALYAISLVVVFLALAALYE). Residue S892 is a topological domain, cytoplasmic. Residues 893–913 (WSIPFSVMLVVPLGVVGALLA) traverse the membrane as a helical segment. The Periplasmic portion of the chain corresponds to 914–927 (TDLRGLSNDVYFQV). Residues 928 to 948 (GLLTTIGLSAKNAILIVEFAV) form a helical membrane-spanning segment. Topologically, residues 949 to 972 (EMMQKEGKTPVEAIIEAARMRLRP) are cytoplasmic. The helical transmembrane segment at 973–993 (ILMTSLAFILGVLPLVISHGA) threads the bilayer. Topologically, residues 994 to 1006 (GSGAQNAVGTGVM) are periplasmic. A helical membrane pass occupies residues 1007-1027 (GGMFAATVLAIYFVPVFFVVV). Topologically, residues 1028 to 1037 (EHLFARFKKA) are cytoplasmic.

It belongs to the resistance-nodulation-cell division (RND) (TC 2.A.6) family. Homotrimer. Part of the tripartite efflux system MdtEF-TolC, which is composed of an inner membrane transporter, MdtF, a membrane fusion protein, MdtE, and an outer membrane component, TolC. The complex forms a large protein conduit and can translocate molecules across both the inner and outer membranes.

The protein resides in the cell inner membrane. In terms of biological role, part of the tripartite efflux system MdtEF-TolC, which confers resistance to various compounds. The protein is Multidrug resistance protein MdtF (mdtF) of Escherichia coli O6:H1 (strain CFT073 / ATCC 700928 / UPEC).